The primary structure comprises 69 residues: Conotoxin AbVIF (69 aa).

Residues 1 to 17 (VLIIAVLFLTACQLTTA) form the signal peptide. Positions 18–40 (ETSSRGKQKHRALRSTDKNSRMS) are excised as a propeptide. Residues 20–41 (SSRGKQKHRALRSTDKNSRMSK) form a disordered region. 3 cysteine pairs are disulfide-bonded: Cys43–Cys57, Cys50–Cys61, and Cys56–Cys68.

The protein belongs to the conotoxin O1 superfamily. As to expression, expressed by the venom duct.

It localises to the secreted. This chain is Conotoxin AbVIF, found in Conus abbreviatus (Abbreviated cone).